Here is a 400-residue protein sequence, read N- to C-terminus: MYPYPNEIGRYGEFGGKFVPETLMRPLEEIETAFKELKNDPVFHAEYKKLLFDYSGRPTALTFADRVSEYLGGAKIYLKREDLNHTGSHKINNALGQILLAKKMGKTKIIAETGAGQHGVAAATAAAKFGFKCTVFMGEEDVARQSLNVFRMKLLGAEVVPVTSGNGTLKDATNEAIRYWVQHCEDHFYLIGSVVGPHPYPYIVREFQKIIGEEAKEQLRRVEGTLPDKVVACVGGGSNAMGIFQAFLDEDTELIGAEAAGKGIDTPLHAATIAKGTLGVIHGSMTYLIQDQYGQIIEPYSISAGLDYPGIGPEHAYLHKSGRVTYESVTDDEAIAALRLLSETEGILPAIESAHALAKAFEMAKDMDKDKIILVSLSGRGDKDVHTLMNVLENGVGTHV.

At K90 the chain carries N6-(pyridoxal phosphate)lysine.

The protein belongs to the TrpB family. In terms of assembly, tetramer of two alpha and two beta chains. Pyridoxal 5'-phosphate is required as a cofactor.

It catalyses the reaction (1S,2R)-1-C-(indol-3-yl)glycerol 3-phosphate + L-serine = D-glyceraldehyde 3-phosphate + L-tryptophan + H2O. The protein operates within amino-acid biosynthesis; L-tryptophan biosynthesis; L-tryptophan from chorismate: step 5/5. In terms of biological role, the beta subunit is responsible for the synthesis of L-tryptophan from indole and L-serine. The sequence is that of Tryptophan synthase beta chain from Bacillus velezensis (strain DSM 23117 / BGSC 10A6 / LMG 26770 / FZB42) (Bacillus amyloliquefaciens subsp. plantarum).